The following is a 181-amino-acid chain: Cytidylate kinase (181 aa).

ATP is bound at residue 12 to 20; sequence GLAGSGTTT.

This sequence belongs to the cytidylate kinase family. Type 2 subfamily.

It is found in the cytoplasm. It carries out the reaction CMP + ATP = CDP + ADP. It catalyses the reaction dCMP + ATP = dCDP + ADP. The polypeptide is Cytidylate kinase (cmk) (Pyrococcus abyssi (strain GE5 / Orsay)).